A 61-amino-acid polypeptide reads, in one-letter code: Small ribosomal subunit protein uS14 (61 aa).

Zn(2+) contacts are provided by cysteine 24, cysteine 27, cysteine 40, and cysteine 43.

Belongs to the universal ribosomal protein uS14 family. Zinc-binding uS14 subfamily. As to quaternary structure, part of the 30S ribosomal subunit. Contacts proteins S3 and S10. Requires Zn(2+) as cofactor.

Its function is as follows. Binds 16S rRNA, required for the assembly of 30S particles and may also be responsible for determining the conformation of the 16S rRNA at the A site. The chain is Small ribosomal subunit protein uS14 from Macrococcus caseolyticus (strain JCSC5402) (Macrococcoides caseolyticum).